The following is a 57-amino-acid chain: Large ribosomal subunit protein eL37 (57 aa).

4 residues coordinate Zn(2+): Cys-20, Cys-23, Cys-35, and Cys-38. The C4-type zinc-finger motif lies at 20–38; the sequence is CRRCGEKSYHKQKKVCASC.

Belongs to the eukaryotic ribosomal protein eL37 family. Zn(2+) is required as a cofactor.

Functionally, binds to the 23S rRNA. This chain is Large ribosomal subunit protein eL37, found in Natronomonas pharaonis (strain ATCC 35678 / DSM 2160 / CIP 103997 / JCM 8858 / NBRC 14720 / NCIMB 2260 / Gabara) (Halobacterium pharaonis).